The sequence spans 298 residues: Adaptation to cold protein C (298 aa).

As to quaternary structure, interacts with the C-terminal extension of AtcJ. Also interacts with AtcB, but not with AtcA.

With respect to regulation, interaction with AtcJ stabilizes AtcC. In terms of biological role, involved in cold adaptation. This Shewanella oneidensis (strain ATCC 700550 / JCM 31522 / CIP 106686 / LMG 19005 / NCIMB 14063 / MR-1) protein is Adaptation to cold protein C.